We begin with the raw amino-acid sequence, 117 residues long: Large ribosomal subunit protein bL20 (117 aa).

This sequence belongs to the bacterial ribosomal protein bL20 family.

Functionally, binds directly to 23S ribosomal RNA and is necessary for the in vitro assembly process of the 50S ribosomal subunit. It is not involved in the protein synthesizing functions of that subunit. The sequence is that of Large ribosomal subunit protein bL20 from Solidesulfovibrio magneticus (strain ATCC 700980 / DSM 13731 / RS-1) (Desulfovibrio magneticus).